Here is a 354-residue protein sequence, read N- to C-terminus: Guanine nucleotide-binding protein alpha-16 subunit (354 aa).

Gly-2 is lipidated: N-myristoyl glycine. Cys-3 is lipidated: S-palmitoyl cysteine. One can recognise a G-alpha domain in the interval 31 to 354 (KTVKLLLLGA…RDNLRTCGLY (324 aa)). The tract at residues 34 to 47 (KLLLLGAGESGKST) is G1 motif. GTP is bound by residues 39-46 (GAGESGKS), 174-180 (LRTRIKT), 199-203 (DVGGQ), 268-271 (NKKD), and Ala-326. The Mg(2+) site is built by Ser-46 and Thr-180. The interval 172-180 (DVLRTRIKT) is G2 motif. A G3 motif region spans residues 195-204 (FVVFDVGGQR). The interval 264 to 271 (ILFLNKKD) is G4 motif. The G5 motif stretch occupies residues 324-329 (TCATDT).

The protein belongs to the G-alpha family. As to quaternary structure, g proteins are composed of 3 units; alpha, beta and gamma. The alpha chain contains the guanine nucleotide binding site.

Guanine nucleotide-binding proteins (G proteins) are involved as modulators or transducers in various transmembrane signaling systems. In the 1-cell embryo, probably together with goa-1, controls nuclear rotation and spindle elongation during mitosis. During the first embryonic cell divisons, plays a role in gpr-1/2 cortical localization and in the proper orientation of EMS blastomere mitotic spindle. The protein is Guanine nucleotide-binding protein alpha-16 subunit (gpa-16) of Caenorhabditis briggsae.